The primary structure comprises 184 residues: Protein GrpE (184 aa).

The segment covering Met1–Asn12 has biased composition (basic and acidic residues). The segment at Met1–Gly22 is disordered.

It belongs to the GrpE family. As to quaternary structure, homodimer.

The protein localises to the cytoplasm. In terms of biological role, participates actively in the response to hyperosmotic and heat shock by preventing the aggregation of stress-denatured proteins, in association with DnaK and GrpE. It is the nucleotide exchange factor for DnaK and may function as a thermosensor. Unfolded proteins bind initially to DnaJ; upon interaction with the DnaJ-bound protein, DnaK hydrolyzes its bound ATP, resulting in the formation of a stable complex. GrpE releases ADP from DnaK; ATP binding to DnaK triggers the release of the substrate protein, thus completing the reaction cycle. Several rounds of ATP-dependent interactions between DnaJ, DnaK and GrpE are required for fully efficient folding. The polypeptide is Protein GrpE (Pseudomonas putida (strain W619)).